The following is a 98-amino-acid chain: NADH-ubiquinone oxidoreductase chain 4L (98 aa).

A run of 3 helical transmembrane segments spans residues 1–21 (MNLI…GLIF), 26–46 (IINI…LFVL), and 61–81 (LYIL…VVIL).

The protein belongs to the complex I subunit 4L family.

The protein resides in the mitochondrion membrane. It catalyses the reaction a ubiquinone + NADH + 5 H(+)(in) = a ubiquinol + NAD(+) + 4 H(+)(out). Functionally, core subunit of the mitochondrial membrane respiratory chain NADH dehydrogenase (Complex I) that is believed to belong to the minimal assembly required for catalysis. Complex I functions in the transfer of electrons from NADH to the respiratory chain. The immediate electron acceptor for the enzyme is believed to be ubiquinone. In Dictyostelium citrinum (Slime mold), this protein is NADH-ubiquinone oxidoreductase chain 4L (nad4L).